A 949-amino-acid polypeptide reads, in one-letter code: MASNHPAFSFHQKQVLRQELTQIQSSLNGGGGHGGKGAPGPGGALPTCPACHKITPRTEAPVSSVSNSLENALHTSAHSTEESLPKRPLGKHSKVSVEKIDLKGLSHTKNDRNVECSFEVLWSDSSITSVTKSSSEVTEFISKLCQLYPEENLEKLIPCLAGPDAFYVERNHVDLDSGLRYLASLPSHVLKNDHVRRFLSTSSPPQQLQSPSPGNPSLSKVGTVMGVSGRPVCGVAGIPSSQSGAQHHGQHPAGSAAPLPHCSHAGSAGSALAYRTQMDTSPAILMPSSLQTPQTQEQNGILDWLRKLRLHKYYPVFKQLSMEKFLSLTEEDLNKFESLTMGAKKKLKTQLELEKEKSERRCLNPSAPPLVTSSGVARVPPTSHVGPVQSGRGSHAAELRVEVEQPHHQLPREGSSSEYSSSSSSPMGVQAREESSDSAEENDRRVEIHLESSDKEKPVMLLNHFTSSSARPTAQVLPVQNEASSNPSGHHPLPPQMLSAASHITPIRMLNSVHKPERGSADMKLLSSSVHSLLSLEERNKGSGPRSSMKVDKSFGSAMMDVLPASAPHQPVQVLSGLSESSSMSPTVSFGPRTKVVHASTLDRVLKTAQQPALVVETSTAATGTPSTVLHAARPPIKLLLSSSVPADSAISGQTSCPNNVQISVPPAIINPRTALYTANTKVAFSAMSSMPVGPLQGGFCANSNTASPSSHPSTSFANMATLPSCPAPSSSPALSSVPESSFYSSSGGGGSTGNIPASNPNHHHHHHHQQPPAPPQPAPPPPGCIVCTSCGCSGSCGSSGLTVSYANYFQHPFSGPSVFTFPFLPFSPMCSSGYVSAQQYGGGSTFPVVHAPYSSSGTPDPVLSGQSTFAVPPMQNFMAGTAGVYQTQGLVGSSNGSSHKKSGNLSCYNCGATGHRAQDCKQPSMDFNRPGTFRLKYAPPAESLDSTD.

Disordered regions lie at residues 25–44 (SSLNGGGGHGGKGAPGPGGA), 59–92 (EAPVSSVSNSLENALHTSAHSTEESLPKRPLGKH), 200–221 (STSSPPQQLQSPSPGNPSLSKV), 236–262 (AGIPSSQSGAQHHGQHPAGSAAPLPHC), 355–457 (KEKS…DKEK), and 739–779 (PESS…PQPA). Residues 28 to 43 (NGGGGHGGKGAPGPGG) are compositionally biased toward gly residues. A compositionally biased stretch (polar residues) spans 61–78 (PVSSVSNSLENALHTSAH). Residues 200 to 219 (STSSPPQQLQSPSPGNPSLS) are compositionally biased toward low complexity. A compositionally biased stretch (basic and acidic residues) spans 395–411 (HAAELRVEVEQPHHQLP). The segment covering 416–425 (SSEYSSSSSS) has biased composition (low complexity). Residues 431 to 457 (AREESSDSAEENDRRVEIHLESSDKEK) are compositionally biased toward basic and acidic residues. The CCHC-type zinc-finger motif lies at 906 to 923 (LSCYNCGATGHRAQDCKQ).

The sequence is that of Zinc finger CCHC domain-containing protein 14 (ZCCHC14) from Homo sapiens (Human).